The chain runs to 872 residues: Alanine--tRNA ligase (872 aa).

Zn(2+)-binding residues include histidine 563, histidine 567, cysteine 665, and histidine 669.

It belongs to the class-II aminoacyl-tRNA synthetase family. Requires Zn(2+) as cofactor.

The protein resides in the cytoplasm. The catalysed reaction is tRNA(Ala) + L-alanine + ATP = L-alanyl-tRNA(Ala) + AMP + diphosphate. Catalyzes the attachment of alanine to tRNA(Ala) in a two-step reaction: alanine is first activated by ATP to form Ala-AMP and then transferred to the acceptor end of tRNA(Ala). Also edits incorrectly charged Ser-tRNA(Ala) and Gly-tRNA(Ala) via its editing domain. The polypeptide is Alanine--tRNA ligase (Bacteroides fragilis (strain ATCC 25285 / DSM 2151 / CCUG 4856 / JCM 11019 / LMG 10263 / NCTC 9343 / Onslow / VPI 2553 / EN-2)).